Reading from the N-terminus, the 88-residue chain is Small ribosomal subunit protein uS15 (88 aa).

This sequence belongs to the universal ribosomal protein uS15 family. In terms of assembly, part of the 30S ribosomal subunit. Forms a bridge to the 50S subunit in the 70S ribosome, contacting the 23S rRNA.

One of the primary rRNA binding proteins, it binds directly to 16S rRNA where it helps nucleate assembly of the platform of the 30S subunit by binding and bridging several RNA helices of the 16S rRNA. In terms of biological role, forms an intersubunit bridge (bridge B4) with the 23S rRNA of the 50S subunit in the ribosome. The chain is Small ribosomal subunit protein uS15 from Mycoplasmopsis agalactiae (strain NCTC 10123 / CIP 59.7 / PG2) (Mycoplasma agalactiae).